We begin with the raw amino-acid sequence, 435 residues long: 5-methylthioadenosine/S-adenosylhomocysteine deaminase (435 aa).

His65 and His67 together coordinate Zn(2+). Residues Glu94, Arg150, and His189 each coordinate substrate. Residue His216 coordinates Zn(2+). Substrate-binding residues include Glu219 and Asp304. Asp304 contributes to the Zn(2+) binding site.

The protein belongs to the metallo-dependent hydrolases superfamily. MTA/SAH deaminase family. The cofactor is Zn(2+).

The enzyme catalyses S-adenosyl-L-homocysteine + H2O + H(+) = S-inosyl-L-homocysteine + NH4(+). It catalyses the reaction S-methyl-5'-thioadenosine + H2O + H(+) = S-methyl-5'-thioinosine + NH4(+). Functionally, catalyzes the deamination of 5-methylthioadenosine and S-adenosyl-L-homocysteine into 5-methylthioinosine and S-inosyl-L-homocysteine, respectively. Is also able to deaminate adenosine. This is 5-methylthioadenosine/S-adenosylhomocysteine deaminase from Bacillus cereus (strain ATCC 14579 / DSM 31 / CCUG 7414 / JCM 2152 / NBRC 15305 / NCIMB 9373 / NCTC 2599 / NRRL B-3711).